We begin with the raw amino-acid sequence, 360 residues long: Protein RecA (360 aa).

64–71 (GHESSGKT) provides a ligand contact to ATP. A disordered region spans residues 333-360 (QEQVQPEPKSKQSKSKQASEQATQDELI).

It belongs to the RecA family.

It localises to the cytoplasm. In terms of biological role, can catalyze the hydrolysis of ATP in the presence of single-stranded DNA, the ATP-dependent uptake of single-stranded DNA by duplex DNA, and the ATP-dependent hybridization of homologous single-stranded DNAs. It interacts with LexA causing its activation and leading to its autocatalytic cleavage. The chain is Protein RecA from Francisella philomiragia subsp. philomiragia (strain ATCC 25017 / CCUG 19701 / FSC 153 / O#319-036).